Reading from the N-terminus, the 99-residue chain is MSRVCELTGKAVLTGNNVSHANNKTKRRFLPNLCQVTLISDALNQRYRLRVSAAALRSVEHRGGLDAFLLKASETELSMRARLLRRQIVKKTAEAAVAA.

It belongs to the bacterial ribosomal protein bL28 family.

This chain is Large ribosomal subunit protein bL28, found in Rhizobium leguminosarum bv. trifolii (strain WSM2304).